Here is a 753-residue protein sequence, read N- to C-terminus: 5-methyltetrahydropteroyltriglutamate--homocysteine methyltransferase (753 aa).

Residues 17 to 20 (RELK) and Lys117 contribute to the 5-methyltetrahydropteroyltri-L-glutamate site. L-homocysteine contacts are provided by residues 431–433 (IGS) and Glu484. Residues 431–433 (IGS) and Glu484 contribute to the L-methionine site. 5-methyltetrahydropteroyltri-L-glutamate-binding positions include 515-516 (RC) and Trp561. Asp599 contacts L-homocysteine. L-methionine is bound at residue Asp599. A 5-methyltetrahydropteroyltri-L-glutamate-binding site is contributed by Glu605. Residues His641, Cys643, and Glu665 each coordinate Zn(2+). The Proton donor role is filled by His694. Cys726 contributes to the Zn(2+) binding site.

It belongs to the vitamin-B12 independent methionine synthase family. Zn(2+) is required as a cofactor.

The enzyme catalyses 5-methyltetrahydropteroyltri-L-glutamate + L-homocysteine = tetrahydropteroyltri-L-glutamate + L-methionine. Its pathway is amino-acid biosynthesis; L-methionine biosynthesis via de novo pathway; L-methionine from L-homocysteine (MetE route): step 1/1. Its function is as follows. Catalyzes the transfer of a methyl group from 5-methyltetrahydrofolate to homocysteine resulting in methionine formation. This is 5-methyltetrahydropteroyltriglutamate--homocysteine methyltransferase from Escherichia coli O6:K15:H31 (strain 536 / UPEC).